The primary structure comprises 130 residues: Small ribosomal subunit protein uS9 (130 aa).

The interval 105 to 130 is disordered; sequence TRDPRMKERKKYGLKKARRAPQFSKR. A compositionally biased stretch (basic residues) spans 111–130; the sequence is KERKKYGLKKARRAPQFSKR.

This sequence belongs to the universal ribosomal protein uS9 family.

The protein is Small ribosomal subunit protein uS9 of Acetivibrio thermocellus (strain ATCC 27405 / DSM 1237 / JCM 9322 / NBRC 103400 / NCIMB 10682 / NRRL B-4536 / VPI 7372) (Clostridium thermocellum).